The following is a 327-amino-acid chain: MSTTEVVRDAQSAENYNPLAKQKAAAKLSRIPVKVVQQGEVLKKPEWIRVKAGSPTTRFYEIKQILRESNLHTVCEEASCPNIGECFGNGTATFMIMGDKCTRRCPFCDVGHGRPDPLDKDEPLNLAKTIAKLRLKYVVITSVDRDDLRDGGSQHFVDCITNIRELSPMTQIEILVPDFRGRDDRALEILKAAPPDVMNHNLETAPRLYKEARPGSDYQFSLNLLKKFKALHPQVPTKSGIMVGLGETDEEILQVMRDMRAHDIDMLTIGQYLSPSGSHLPVRRYVHPDTFKMFEEEAYKMGFSHAAVGAMVRSSYHADQQAHAAGV.

[4Fe-4S] cluster-binding residues include cysteine 75, cysteine 80, cysteine 86, cysteine 101, cysteine 105, cysteine 108, and serine 315. In terms of domain architecture, Radical SAM core spans 87-304 (FGNGTATFMI…EEEAYKMGFS (218 aa)).

This sequence belongs to the radical SAM superfamily. Lipoyl synthase family. The cofactor is [4Fe-4S] cluster.

It localises to the cytoplasm. The enzyme catalyses [[Fe-S] cluster scaffold protein carrying a second [4Fe-4S](2+) cluster] + N(6)-octanoyl-L-lysyl-[protein] + 2 oxidized [2Fe-2S]-[ferredoxin] + 2 S-adenosyl-L-methionine + 4 H(+) = [[Fe-S] cluster scaffold protein] + N(6)-[(R)-dihydrolipoyl]-L-lysyl-[protein] + 4 Fe(3+) + 2 hydrogen sulfide + 2 5'-deoxyadenosine + 2 L-methionine + 2 reduced [2Fe-2S]-[ferredoxin]. The protein operates within protein modification; protein lipoylation via endogenous pathway; protein N(6)-(lipoyl)lysine from octanoyl-[acyl-carrier-protein]: step 2/2. In terms of biological role, catalyzes the radical-mediated insertion of two sulfur atoms into the C-6 and C-8 positions of the octanoyl moiety bound to the lipoyl domains of lipoate-dependent enzymes, thereby converting the octanoylated domains into lipoylated derivatives. The sequence is that of Lipoyl synthase from Variovorax paradoxus (strain S110).